An 879-amino-acid chain; its full sequence is Pentatricopeptide repeat-containing protein At1g71210, mitochondrial (879 aa).

The N-terminal 44 residues, 1–44 (MLRCWSVTVERSCEGMLLRRRILSLSASSFRNFTSGNNGDAIPF), are a transit peptide targeting the mitochondrion. PPR repeat units lie at residues 181-215 (SLRLCDALVVGYAVAGRTDIALQHFGNMRFRGLDL), 216-246 (DSFGYHVLLNALVEEKCFDSFDVIFDQISVR), 250-280 (CAVTHSILVKKFCKQGKLDEAEDYLRALLPN), 285-319 (CGSGLGILVDALCSKRKFQEATKLLDEIKLVGTVN), 320-355 (MDRAYNIWIRALIKAGFLNNPADFLQKISPLEGCEL), 356-390 (EVFRYNSMVFQLLKENNLDGVYDILTEMMVRGVSP), 391-425 (NKKTMNAALCFFCKAGFVDEALELYRSRSEIGFAP), 426-460 (TAMSYNYLIHTLCANESVEQAYDVLKGAIDRGHFL), 461-495 (GGKTFSTLTNALCWKGKPDMARELVIAAAERDLLP), 496-530 (KRIAGCKIISALCDVGKVEDALMINELFNKSGVDT), 531-565 (SFKMFTSLIYGSITLMRGDIAAKLIIRMQEKGYTP), 566-597 (TRSLYRNVIQCVCEMESGEKNFFTTLLKFQLS), 602-636 (KVQAYNLFIEGAGFAGKPKLARLVYDMMDRDGITP), 637-667 (TVASNILMLQSYLKNEKIADALHFFHDLREQ), 671-705 (KKRLYQVMIVGLCKANKLDDAMHFLEEMKGEGLQP), and 706-740 (SIECYEVNIQKLCNEEKYDEAVGLVNEFRKSGRRI).

This sequence belongs to the PPR family. P subfamily.

Its subcellular location is the mitochondrion. The polypeptide is Pentatricopeptide repeat-containing protein At1g71210, mitochondrial (Arabidopsis thaliana (Mouse-ear cress)).